We begin with the raw amino-acid sequence, 254 residues long: Small ribosomal subunit protein uS2 (254 aa).

It belongs to the universal ribosomal protein uS2 family.

In Borrelia duttonii (strain Ly), this protein is Small ribosomal subunit protein uS2.